The primary structure comprises 57 residues: UPF0057 membrane protein T23F2.4 (57 aa).

Helical transmembrane passes span 3-23 (ITCM…VGVF) and 36-56 (ILLT…IILA).

The protein belongs to the UPF0057 (PMP3) family.

It is found in the membrane. This chain is UPF0057 membrane protein T23F2.4, found in Caenorhabditis elegans.